The primary structure comprises 227 residues: MHLDHAHTHDGPSAVSADAHRPDGTRRALRIGLGGPVGSGKTATVAALCRALRDAFSLAVVTNDIYTREDAEFLLREAVLPPERITAVETGACPHTAIRDDISANLEAVEDLEDEVGPLDLVLVESGGDNLTATFSKGLVDAQIFVIDVAGGDDIPRKGGPGVTTADLLVVNKTDLAPYVGSDLGRMAADAKAQRAELPVVFQSLRTEPGVAPVADWVRARLAAWAA.

Over residues 1–10 (MHLDHAHTHD) the composition is skewed to basic and acidic residues. Residues 1–22 (MHLDHAHTHDGPSAVSADAHRP) are disordered. 35–42 (GPVGSGKT) is a GTP binding site.

Belongs to the SIMIBI class G3E GTPase family. UreG subfamily. Homodimer. UreD, UreF and UreG form a complex that acts as a GTP-hydrolysis-dependent molecular chaperone, activating the urease apoprotein by helping to assemble the nickel containing metallocenter of UreC. The UreE protein probably delivers the nickel.

It is found in the cytoplasm. Functionally, facilitates the functional incorporation of the urease nickel metallocenter. This process requires GTP hydrolysis, probably effectuated by UreG. The protein is Urease accessory protein UreG of Streptomyces avermitilis (strain ATCC 31267 / DSM 46492 / JCM 5070 / NBRC 14893 / NCIMB 12804 / NRRL 8165 / MA-4680).